The primary structure comprises 430 residues: MARILRNVYSLRSSLFSSELLRRSVVGTSFQLRGFAAKAKKKSKSDGNGSSEEGMSKKEIALQQALDQITSSFGKGSIMYLGRAVSPRNVPVFSTGSFALDVALGVGGLPKGRVVEIYGPEASGKTTLALHVIAEAQKQGGTCVFVDAEHALDSSLAKAIGVNTENLLLSQPDCGEQALSLVDTLIRSGSVDVIVVDSVAALVPKGELEGEMGDAHMAMQARLMSQALRKLSHSLSLSQTLLIFINQVRSKLSTFGGFGGPTEVTCGGNALKFYASMRLNIKRIGLIKKGEETTGSQVSVKIVKNKLAPPFRTAQFELEFGKGICKITEIIDLSIKHKFIAKNGTFYNLNGKNYHGKEALKRFLKQNESDQEELMKKLQDKLIADEAADKETESESEEEDSLRVVVSPDNTDDESPALVVGAAAVVVEAA.

The transit peptide at 1 to 35 (MARILRNVYSLRSSLFSSELLRRSVVGTSFQLRGF) directs the protein to the mitochondrion. 119 to 126 (GPEASGKT) contributes to the ATP binding site. The segment at 385–415 (DEAADKETESESEEEDSLRVVVSPDNTDDES) is disordered.

The protein belongs to the RecA family.

Its subcellular location is the mitochondrion. Functionally, involved in recombination ability and DNA strand transfer activity. In Arabidopsis thaliana (Mouse-ear cress), this protein is DNA repair protein recA homolog 3, mitochondrial.